The sequence spans 119 residues: Protein TusC (119 aa).

This sequence belongs to the DsrF/TusC family. As to quaternary structure, heterohexamer, formed by a dimer of trimers. The hexameric TusBCD complex contains 2 copies each of TusB, TusC and TusD. The TusBCD complex interacts with TusE.

It is found in the cytoplasm. Functionally, part of a sulfur-relay system required for 2-thiolation of 5-methylaminomethyl-2-thiouridine (mnm(5)s(2)U) at tRNA wobble positions. This Shigella boydii serotype 18 (strain CDC 3083-94 / BS512) protein is Protein TusC.